A 591-amino-acid chain; its full sequence is Monoterpene synthase 8, chloroplastic (591 aa).

The transit peptide at 1–46 (MSLLLAPPSYFPFRGLRRSTAAKQPPCLRLVKCTADRQSPEAARRS) directs the protein to the chloroplast. Asp346, Asp350, and Glu497 together coordinate Mg(2+). The DDXXD motif signature appears at 346–350 (DDVYD).

This sequence belongs to the terpene synthase family. Tpsa subfamily. It depends on Mg(2+) as a cofactor. Requires Mn(2+) as cofactor. Highly expressed in flowers, petals and sepals, but almost undetectable in vegetative organs.

The protein localises to the plastid. It localises to the chloroplast. It carries out the reaction (2E)-geranyl diphosphate + H2O = (R)-linalool + diphosphate. The enzyme catalyses (2E)-geranyl diphosphate + H2O = (S)-linalool + diphosphate. It catalyses the reaction (2E,6E)-farnesyl diphosphate = (S)-beta-bisabolene + diphosphate. The catalysed reaction is (2E,6E)-farnesyl diphosphate = (E,R)-alpha-bisabolene + diphosphate. It carries out the reaction (2E,6E)-farnesyl diphosphate = (E)-beta-farnesene + diphosphate. The enzyme catalyses (2E,6E)-farnesyl diphosphate = beta-sesquiphellandrene + diphosphate. It catalyses the reaction (2E,6E)-farnesyl diphosphate = (1S,5S,6R)-alpha-bergamotene + diphosphate. Its pathway is secondary metabolite biosynthesis; terpenoid biosynthesis. Functionally, sesquiterpene and monoterpene synthase involved in the biosynthesis of volatile compounds present in floral scent. Mediates the conversion of (2E)-geranyl diphosphate (GPP) into linalool, with trace levels of myrcene, limonene and (Z)-beta-ocimene. Also acts as a sesquiterpene synthase by catalyzing the conversion of farnesyl diphosphate (FPP) to alpha-bergamotene and beta-bisabolene and to minor products including alpha-curcumene, cis-alpha-bisabolene, beta-farnesene and beta-sesquiphellandrene, as well as seven other unidentified sesquiterpenes. This chain is Monoterpene synthase 8, chloroplastic, found in Hedychium coronarium (White butterfly ginger-lily).